Consider the following 338-residue polypeptide: MEIPGKCTSEEIRLTLTSSFMMGNHCFILLIIISSVFLTVFAIRKLWKNNIFPNCTRTLLFSAIINGVVHHWSIAGIRIRTVYRALVYGSDRCSILFQSSECLIESNLYYYTNLFSSLCCISLFFDRLLSLNAKTSYNTKHFSKIFLLFQSISPFGILYWIFYDSVYTGFVPMCSYPPATSSLKFHKVNEFRLYILGTFFVLSFVIFFYNRTQEKGIIHNVYDTESRYKSYENLLATRAVCIIIATQITCLVTTASTTEILSAYKSSIPNTILLPSIAFMTGLTYSNFFLPIIIIYQTNRIINQRYNAIKRIQNEKSFATHFASLDLSWKSSKIDNSS.

The next 7 membrane-spanning stretches (helical) occupy residues 23–43 (GNHCFILLIIISSVFLTVFAI), 59–79 (LLFSAIINGVVHHWSIAGIRI), 108–125 (LYYYTNLFSSLCCISLFF), 142–162 (FSKIFLLFQSISPFGILYWIF), 188–208 (VNEFRLYILGTFFVLSFVIFF), 240–260 (VCIIIATQITCLVTTASTTEI), and 276–296 (SIAFMTGLTYSNFFLPIIIIY).

It belongs to the nematode receptor-like protein sra family.

It localises to the membrane. In Caenorhabditis elegans, this protein is Serpentine receptor class alpha-31 (sra-31).